Reading from the N-terminus, the 142-residue chain is Nucleoside diphosphate kinase (142 aa).

Lys-11, Phe-59, Arg-87, Thr-93, Arg-104, and Asn-114 together coordinate ATP. The active-site Pros-phosphohistidine intermediate is the His-117.

Belongs to the NDK family. In terms of assembly, homotetramer. It depends on Mg(2+) as a cofactor.

The protein resides in the cytoplasm. It catalyses the reaction a 2'-deoxyribonucleoside 5'-diphosphate + ATP = a 2'-deoxyribonucleoside 5'-triphosphate + ADP. The enzyme catalyses a ribonucleoside 5'-diphosphate + ATP = a ribonucleoside 5'-triphosphate + ADP. Major role in the synthesis of nucleoside triphosphates other than ATP. The ATP gamma phosphate is transferred to the NDP beta phosphate via a ping-pong mechanism, using a phosphorylated active-site intermediate. In Thiobacillus denitrificans (strain ATCC 25259 / T1), this protein is Nucleoside diphosphate kinase.